We begin with the raw amino-acid sequence, 704 residues long: Elongation factor G (704 aa).

One can recognise a tr-type G domain in the interval 8–290 (ARYRNIGISA…AVIDYLPSPV (283 aa)). Residues 17–24 (AHIDAGKT), 88–92 (DTPGH), and 142–145 (NKMD) each bind GTP.

This sequence belongs to the TRAFAC class translation factor GTPase superfamily. Classic translation factor GTPase family. EF-G/EF-2 subfamily.

It is found in the cytoplasm. Its function is as follows. Catalyzes the GTP-dependent ribosomal translocation step during translation elongation. During this step, the ribosome changes from the pre-translocational (PRE) to the post-translocational (POST) state as the newly formed A-site-bound peptidyl-tRNA and P-site-bound deacylated tRNA move to the P and E sites, respectively. Catalyzes the coordinated movement of the two tRNA molecules, the mRNA and conformational changes in the ribosome. This is Elongation factor G from Cronobacter sakazakii (strain ATCC BAA-894) (Enterobacter sakazakii).